The chain runs to 272 residues: Putative pyruvate, phosphate dikinase regulatory protein (272 aa).

154-161 (GVSRTSKS) lines the ADP pocket.

Belongs to the pyruvate, phosphate/water dikinase regulatory protein family. PDRP subfamily.

The catalysed reaction is N(tele)-phospho-L-histidyl/L-threonyl-[pyruvate, phosphate dikinase] + ADP = N(tele)-phospho-L-histidyl/O-phospho-L-threonyl-[pyruvate, phosphate dikinase] + AMP + H(+). It catalyses the reaction N(tele)-phospho-L-histidyl/O-phospho-L-threonyl-[pyruvate, phosphate dikinase] + phosphate + H(+) = N(tele)-phospho-L-histidyl/L-threonyl-[pyruvate, phosphate dikinase] + diphosphate. Its function is as follows. Bifunctional serine/threonine kinase and phosphorylase involved in the regulation of the pyruvate, phosphate dikinase (PPDK) by catalyzing its phosphorylation/dephosphorylation. The protein is Putative pyruvate, phosphate dikinase regulatory protein of Wolbachia pipientis subsp. Culex pipiens (strain wPip).